Here is a 131-residue protein sequence, read N- to C-terminus: Histone H2A-beta (131 aa).

S2 carries the N-acetylserine modification. K5 and K9 each carry N6-acetyllysine. N5-methylglutamine is present on Q106. S128 carries the phosphoserine modification. The [ST]-Q motif signature appears at 128–129 (SQ).

It belongs to the histone H2A family. The nucleosome is a histone octamer containing two molecules each of H2A, H2B, H3 and H4 assembled in one H3-H4 heterotetramer and two H2A-H2B heterodimers. The octamer wraps approximately 147 bp of DNA. In terms of processing, phosphorylated to form H2AS128ph (gamma-H2A) in response to DNA double-strand breaks (DSBs) generated by exogenous genotoxic agents and by stalled replication forks. Phosphorylation is dependent on the DNA damage checkpoint kinases rad3/ATR and tel1/ATM, spreads on either side of a detected DSB site and may mark the surrounding chromatin for recruitment of proteins required for DNA damage signaling and repair. Gamma-H2A is required for recruiting crb2, a modulator of DNA damage checkpoint signaling, to DSB sites. Gamma-H2A is removed from the DNA prior to the strand invasion-primer extension step of the repair process and subsequently dephosphorylated. Dephosphorylation is necessary for efficient recovery from the DNA damage checkpoint. Post-translationally, acetylated by esa1 to form H2AK4ac and H2AK7ac.

The protein resides in the nucleus. It is found in the chromosome. Its function is as follows. Core component of nucleosome which plays a central role in DNA double strand break (DSB) repair. Nucleosomes wrap and compact DNA into chromatin, limiting DNA accessibility to the cellular machineries which require DNA as a template. Histones thereby play a central role in transcription regulation, DNA repair, DNA replication and chromosomal stability. DNA accessibility is regulated via a complex set of post-translational modifications of histones, also called histone code, and nucleosome remodeling. This chain is Histone H2A-beta (hta2), found in Schizosaccharomyces pombe (strain 972 / ATCC 24843) (Fission yeast).